A 148-amino-acid chain; its full sequence is MSEHLIVKNKKAYFNYEIIQTYQAGIVLNGPEIKSIRNHDVSINEAFVLIRKKEIYILNMNVKKYQFANYIKGLEETRTRKLLLHKKEIIKILNKIKQENLTIIPVKLYFKNDYVKLEIALAKGKKLHDKRQTIKKRDTERKELKNYK.

The protein belongs to the SmpB family.

The protein localises to the cytoplasm. In terms of biological role, required for rescue of stalled ribosomes mediated by trans-translation. Binds to transfer-messenger RNA (tmRNA), required for stable association of tmRNA with ribosomes. tmRNA and SmpB together mimic tRNA shape, replacing the anticodon stem-loop with SmpB. tmRNA is encoded by the ssrA gene; the 2 termini fold to resemble tRNA(Ala) and it encodes a 'tag peptide', a short internal open reading frame. During trans-translation Ala-aminoacylated tmRNA acts like a tRNA, entering the A-site of stalled ribosomes, displacing the stalled mRNA. The ribosome then switches to translate the ORF on the tmRNA; the nascent peptide is terminated with the 'tag peptide' encoded by the tmRNA and targeted for degradation. The ribosome is freed to recommence translation, which seems to be the essential function of trans-translation. In Mycoplasma mycoides subsp. mycoides SC (strain CCUG 32753 / NCTC 10114 / PG1), this protein is SsrA-binding protein.